The chain runs to 446 residues: COBRA-like protein 1 (446 aa).

The N-terminal stretch at 1–28 is a signal peptide; it reads MALLLLRMGVSVALLVAFFSSLIPSSEA. 9 N-linked (GlcNAc...) asparagine glycosylation sites follow: Asn-37, Asn-162, Asn-170, Asn-209, Asn-234, Asn-316, Asn-331, Asn-350, and Asn-419. The GPI-anchor amidated alanine moiety is linked to residue Ala-420. Residues 421 to 446 constitute a propeptide, removed in mature form; it reads STRVMSSILLPFITIWTALTFLMVYA.

This sequence belongs to the COBRA family.

Its subcellular location is the cell membrane. Functionally, involved in determining the orientation of cell expansion, probably by playing an important role in cellulose deposition. May act by recruiting cellulose synthesizing complexes to discrete positions on the cell surface. This Oryza sativa subsp. japonica (Rice) protein is COBRA-like protein 1 (BC1L6).